The chain runs to 345 residues: Glycerol-3-phosphate dehydrogenase [NAD(P)+] (345 aa).

5 residues coordinate NADPH: S11, W12, H32, R33, and K106. Residues K106, G137, and S139 each coordinate sn-glycerol 3-phosphate. A141 lines the NADPH pocket. Positions 192, 245, 255, 256, and 257 each coordinate sn-glycerol 3-phosphate. K192 acts as the Proton acceptor in catalysis. Residue R256 coordinates NADPH. Positions 280 and 282 each coordinate NADPH.

Belongs to the NAD-dependent glycerol-3-phosphate dehydrogenase family.

It is found in the cytoplasm. It carries out the reaction sn-glycerol 3-phosphate + NAD(+) = dihydroxyacetone phosphate + NADH + H(+). The enzyme catalyses sn-glycerol 3-phosphate + NADP(+) = dihydroxyacetone phosphate + NADPH + H(+). The protein operates within membrane lipid metabolism; glycerophospholipid metabolism. With respect to regulation, does not seem to be inhibited by sn-glycerol 3-phosphate, in contrast to the E.coli homolog enzyme which is very sensitive to allosteric inhibition by G3P. Functionally, catalyzes the reduction of the glycolytic intermediate dihydroxyacetone phosphate (DHAP) to sn-glycerol 3-phosphate (G3P), the key precursor for phospholipid synthesis. This Bacillus subtilis (strain 168) protein is Glycerol-3-phosphate dehydrogenase [NAD(P)+].